Consider the following 776-residue polypeptide: ADP-ribosylation factor GTPase-activating protein AGD2 (776 aa).

Positions 2-226 constitute a BAR domain; it reads AGFINLEDSP…IHQVLTYAQQ (225 aa). The segment at 248-267 is disordered; it reads QSELDSQQASAKADPSDVGG. In terms of domain architecture, PH spans 290-421; that stretch reads EVTKQGYLLK…WVNKITAAIT (132 aa). The Arf-GAP domain occupies 467-604; sequence DDVLTILREI…ALVVKDEREA (138 aa). Residues 482–505 form a C4-type zinc finger; it reads CAECNAPDPDWASLNLGVLMCIEC. ANK repeat units lie at residues 683–712 and 716–745; these read QGCSLLHVACQSGDPILLELLLQFGADINM and HGRTPLHHCIASGNNAFAKVLLRRGARPSI.

As to expression, expressed in roots, hypocotyls, cotyledons, leaf and shoot apical meristems and siliques.

In terms of biological role, probable GTPase-activating protein. The protein is ADP-ribosylation factor GTPase-activating protein AGD2 (AGD2) of Arabidopsis thaliana (Mouse-ear cress).